Here is a 110-residue protein sequence, read N- to C-terminus: Parvalbumin alpha (110 aa).

Ser2 carries the N-acetylserine modification. A phosphoserine mark is found at Ser2, Ser8, and Ser24. EF-hand domains are found at residues 39-74 and 78-110; these read KNPDEVKKVFHILDKDKSGFIEEDELGSILKGFSSD and LSAKETKTLLAAGDKDGDGKIGVEEFSTLVAES. Ca(2+)-binding residues include Asp52, Asp54, Ser56, Phe58, Glu60, Glu63, Asp91, Asp93, Asp95, Lys97, and Glu102.

As to expression, expressed in the modiolar nerve root (at protein level).

In terms of biological role, in muscle, parvalbumin is thought to be involved in relaxation after contraction. It binds two calcium ions. The protein is Parvalbumin alpha (Pvalb) of Mus musculus (Mouse).